The primary structure comprises 607 residues: Dopamine receptor 3 (607 aa).

At 1 to 23 (MLAGQHHVTDIESPLMVVLWRVA) the chain is on the extracellular side. Residues 24 to 44 (AGVFLPLVPTMAVFGNVLVIM) traverse the membrane as a helical segment. Residues 45–58 (SVFRERSLQTVTNM) lie on the Cytoplasmic side of the membrane. The helical transmembrane segment at 59-79 (LIVSLAVSDFMVAIGVMSFGV) threads the bilayer. Topologically, residues 80–96 (YYEWNDFKWGLGSFFCH) are extracellular. C95 and C173 are oxidised to a cystine. Residues 97–117 (VYQALDVACSTASILNLLAIS) form a helical membrane-spanning segment. Residues 118-141 (LDRYIAIGHPISYAQYGARGGRAM) lie on the Cytoplasmic side of the membrane. The chain crosses the membrane as a helical span at residues 142–162 (ISITIVWGVSVAVALPLLLGV). At 163 to 182 (NPMEENDLQECELANPYFNM) the chain is on the extracellular side. A helical membrane pass occupies residues 183-203 (ISSIFSFFIPCIAMIILYTII). At 204 to 523 (FRRLRQRERA…TKQMRREHKA (320 aa)) the chain is on the cytoplasmic side. The interval 402-435 (VPSIQDEKKLSQKSNDLPFSHQNGTHKQKLLPNP) is disordered. Over residues 413–424 (QKSNDLPFSHQN) the composition is skewed to polar residues. The helical transmembrane segment at 524-544 (TVTLAVVLAVFLFCWLPFFVL) threads the bilayer. The Extracellular segment spans residues 545–558 (HLSNSICLIIDENS). A helical transmembrane segment spans residues 559 to 579 (ACVGFLPLYLATWLGYLNSSL). Topologically, residues 580 to 607 (NPLIYTVFDQRFRNAFRNILSCGIFKKR) are cytoplasmic.

The protein belongs to the G-protein coupled receptor 1 family. Expressed in the neurons of the head, ventral cord and tail with weak expression observed in body wall muscles and PVD neurons. In the ventral cord, expressed strongly in GABAergic neurons with weaker expression in cholinergic motor neurons. Expressed in cholinergic SIA neurons and octopaminergic RIC neurons. In males, expressed in the dorsal and ventral spicule protractor and retractor muscles, and the sensory post-cloacal sensilla B (PCB) neuron. Expressed in the head acetylcholine neurons. Expressed in the AVA, AVB, AVD and AVE command interneurons. Expressed in premotor interneurons.

It localises to the cell membrane. Its function is as follows. G-protein coupled receptor which binds to the neurotransmitter dopamine with high affinity leading to the activation of an associated G-protein and downstream signaling pathways. Couples to G-proteins to inhibit adenylate cyclase (AC) activity and cAMP production. Antagonizes the D1-like dopamine receptor dop-1 to negatively regulate the rate of locomotion. Negatively regulates locomotion through the activation of goa-1 subunit proteins which inactivates the unc-77/nca-1 and nca-2 ion-channels in the command interneurons. Inhibits early-stage swimming by modulating the unc-77/nca-1 and nca-2 ion channels of premotor interneurons. In GABAergic, RIC, and SIA neurons, antagonizes the function of dop-1 to play a role in behavioral plasticity and regulate the decision-making process when conflicting alternatives are present. Antagonizes octopamine signaling in response to food by promoting the dopamine-mediated suppression of crh-1/CREB1 transcription factor activation in cholinergic SIA neurons. This is most likely in association with the G(o)-alpha G-protein subunit goa-1. Promotes male mating behavior by antagonizing acetylcholine signaling to control the protrusion of copulatory spicules from the tail of males during hermaphrodite vulval location. Under mitochondria stress, plays a role in bacterial preference, resulting in learned avoidance behavior. This Caenorhabditis elegans protein is Dopamine receptor 3.